A 105-amino-acid chain; its full sequence is Large ribosomal subunit protein bL21 (105 aa).

Belongs to the bacterial ribosomal protein bL21 family. As to quaternary structure, part of the 50S ribosomal subunit. Contacts protein L20.

This protein binds to 23S rRNA in the presence of protein L20. The chain is Large ribosomal subunit protein bL21 from Desulfatibacillum aliphaticivorans.